The primary structure comprises 231 residues: Uracil phosphoribosyltransferase (231 aa).

Position 38–42 (38–42) interacts with GTP; the sequence is KGLVR. 5-phospho-alpha-D-ribose 1-diphosphate is bound by residues arginine 87, arginine 112, and 140–148; that span reads DPMIATGST. Uracil-binding positions include isoleucine 203 and 208-210; that span reads GDA. Residue aspartate 209 coordinates 5-phospho-alpha-D-ribose 1-diphosphate.

The protein belongs to the UPRTase family. Requires Mg(2+) as cofactor.

It catalyses the reaction UMP + diphosphate = 5-phospho-alpha-D-ribose 1-diphosphate + uracil. It functions in the pathway pyrimidine metabolism; UMP biosynthesis via salvage pathway; UMP from uracil: step 1/1. Its activity is regulated as follows. Allosterically activated by GTP. Catalyzes the conversion of uracil and 5-phospho-alpha-D-ribose 1-diphosphate (PRPP) to UMP and diphosphate. This Methanococcus maripaludis (strain C5 / ATCC BAA-1333) protein is Uracil phosphoribosyltransferase.